The sequence spans 568 residues: Nucleoprotein (568 aa).

Residues 54 to 240 (MRKEKRDDSD…IDGNKSAINI (187 aa)) are binding site for the cap structure m7GTP. Positions 388 and 390 each coordinate Mn(2+). Residues Glu398, Cys505, His508, and Cys528 each contribute to the Zn(2+) site. Residue Asp532 participates in Mn(2+) binding.

Belongs to the arenaviridae nucleocapsid protein family. As to quaternary structure, homomultimerizes to form the nucleocapsid. Binds to viral genomic RNA. Interacts with glycoprotein G2. Interacts with protein Z; this interaction probably directs the encapsidated genome to budding sites. Interacts with protein L; this interaction does not interfere with Z-L interaction. Interacts with host IKBKE (via Protein kinase domain); the interaction inhibits IKBKE kinase activity.

The protein resides in the virion. The protein localises to the host cytoplasm. Its function is as follows. Encapsidates the genome, protecting it from nucleases. The encapsidated genomic RNA is termed the nucleocapsid (NC). Serves as template for viral transcription and replication. The increased presence of protein N in host cell does not seem to trigger the switch from transcription to replication as observed in other negative strain RNA viruses. Through the interaction with host IKBKE, strongly inhibits the phosphorylation and nuclear translocation of host IRF3, a protein involved in interferon activation pathway, leading to the inhibition of interferon-beta and IRF3-dependent promoters activation. Also encodes a functional 3'-5' exoribonuclease that degrades preferentially dsRNA substrates and thereby participates in the suppression of interferon induction. The protein is Nucleoprotein of Praomys (African soft-furred rats).